The following is a 456-amino-acid chain: Arginine biosynthesis bifunctional protein ArgJ, mitochondrial (456 aa).

Substrate contacts are provided by threonine 184, lysine 213, threonine 224, glutamate 311, asparagine 451, and threonine 456. The active-site Nucleophile is the threonine 224.

This sequence belongs to the ArgJ family. In terms of assembly, heterodimer of an alpha and a beta chain. In terms of processing, the alpha and beta chains are autoproteolytically processed from a single precursor protein within the mitochondrion.

It localises to the mitochondrion matrix. The catalysed reaction is N(2)-acetyl-L-ornithine + L-glutamate = N-acetyl-L-glutamate + L-ornithine. The enzyme catalyses L-glutamate + acetyl-CoA = N-acetyl-L-glutamate + CoA + H(+). The protein operates within amino-acid biosynthesis; L-arginine biosynthesis; L-ornithine and N-acetyl-L-glutamate from L-glutamate and N(2)-acetyl-L-ornithine (cyclic): step 1/1. It participates in amino-acid biosynthesis; L-arginine biosynthesis; N(2)-acetyl-L-ornithine from L-glutamate: step 1/4. Its function is as follows. Catalyzes two activities which are involved in the cyclic version of arginine biosynthesis: the synthesis of acetylglutamate from glutamate and acetyl-CoA, and of ornithine by transacetylation between acetylornithine and glutamate. This is Arginine biosynthesis bifunctional protein ArgJ, mitochondrial from Neosartorya fischeri (strain ATCC 1020 / DSM 3700 / CBS 544.65 / FGSC A1164 / JCM 1740 / NRRL 181 / WB 181) (Aspergillus fischerianus).